The chain runs to 431 residues: Adenylosuccinate synthetase (431 aa).

Residues 13 to 19 and 41 to 43 contribute to the GTP site; these read GDEGKGK and GHT. The active-site Proton acceptor is the Asp14. Mg(2+) contacts are provided by Asp14 and Gly41. IMP is bound by residues 14–17, 39–42, Thr130, Arg144, Gln225, Thr240, and Arg304; these read DEGK and NAGH. The active-site Proton donor is the His42. A substrate-binding site is contributed by 300–306; that stretch reads AVTGRPR. GTP is bound by residues Arg306, 332-334, and 415-417; these read KLD and STG.

This sequence belongs to the adenylosuccinate synthetase family. Homodimer. Requires Mg(2+) as cofactor.

It localises to the cytoplasm. It catalyses the reaction IMP + L-aspartate + GTP = N(6)-(1,2-dicarboxyethyl)-AMP + GDP + phosphate + 2 H(+). It functions in the pathway purine metabolism; AMP biosynthesis via de novo pathway; AMP from IMP: step 1/2. Its function is as follows. Plays an important role in the de novo pathway of purine nucleotide biosynthesis. Catalyzes the first committed step in the biosynthesis of AMP from IMP. The protein is Adenylosuccinate synthetase of Legionella pneumophila (strain Lens).